Reading from the N-terminus, the 889-residue chain is Cytoplasmic aconitate hydratase (889 aa).

Substrate contacts are provided by residues Gln-86 and 205-207; that span reads DSH. [4Fe-4S] cluster contacts are provided by Cys-437, Cys-503, and Cys-506. Substrate-binding positions include Arg-536, Arg-541, Arg-699, and 779–780; that span reads SR.

It belongs to the aconitase/IPM isomerase family. Interacts (when associated with the 4Fe-4S) with FBXL5. Interacts with frataxin(81-210). The cofactor is [4Fe-4S] cluster.

The protein localises to the cytoplasm. Its subcellular location is the cytosol. It catalyses the reaction citrate = D-threo-isocitrate. Its function is as follows. Bifunctional iron sensor that switches between 2 activities depending on iron availability. Iron deprivation, promotes its mRNA binding activity through which it regulates the expression of genes involved in iron uptake, sequestration and utilization. Binds to iron-responsive elements (IRES) in the untranslated region of target mRNAs preventing for instance the translation of ferritin and aminolevulinic acid synthase and stabilizing the transferrin receptor mRNA. Functionally, conversely, when cellular iron levels are high, binds a 4Fe-4S cluster which precludes RNA binding activity and promotes the aconitase activity, the isomerization of citrate to isocitrate via cis-aconitate. In Rattus norvegicus (Rat), this protein is Cytoplasmic aconitate hydratase (Aco1).